A 233-amino-acid chain; its full sequence is 2-amino-5-formylamino-6-ribosylaminopyrimidin-4(3H)-one 5'-monophosphate deformylase (233 aa).

Fe cation-binding residues include Glu-33, His-35, Asp-44, and His-114.

It belongs to the creatininase superfamily. FAPy deformylase family. As to quaternary structure, homodimer. It depends on Fe(2+) as a cofactor. Zn(2+) is required as a cofactor.

It catalyses the reaction 2-amino-5-formylamino-6-(5-phospho-D-ribosylamino)pyrimidin-4(3H)-one + H2O = 2,5-diamino-6-(1-D-ribosylamino)pyrimidin-4(3H)-one 5'-phosphate + formate + H(+). It participates in cofactor biosynthesis; coenzyme F420 biosynthesis. The protein operates within cofactor biosynthesis; riboflavin biosynthesis. In terms of biological role, catalyzes the hydrolysis of the formamide of 2-amino-5-formylamino-6-ribosylamino-4(3H)-pyrimidinone 5'-monophosphate (FAPy) to form 2,5-diamino-6-ribosylamino-4(3H)-pyrimidinone 5'-phosphate (APy). This is 2-amino-5-formylamino-6-ribosylaminopyrimidin-4(3H)-one 5'-monophosphate deformylase from Methanosphaera stadtmanae (strain ATCC 43021 / DSM 3091 / JCM 11832 / MCB-3).